We begin with the raw amino-acid sequence, 390 residues long: Neuromedin-B receptor (390 aa).

Positions 1 to 20 are disordered; sequence MPPRSLPNLSLPTEASESEL. Residues 1–41 lie on the Extracellular side of the membrane; it reads MPPRSLPNLSLPTEASESELEPEVWENDFLPDSDGTTAELV. The N-linked (GlcNAc...) asparagine glycan is linked to N8. Residues 42–65 traverse the membrane as a helical segment; the sequence is IRCVIPSLYLIIISVGLLGNIMLV. Residues 66 to 79 lie on the Cytoplasmic side of the membrane; that stretch reads KIFLTNSTMRSVPN. A helical membrane pass occupies residues 80 to 99; that stretch reads IFISNLAAGDLLLLLTCVPV. At 100–117 the chain is on the extracellular side; sequence DASRYFFDEWVFGKLGCK. A disulfide bridge connects residues C116 and C198. Residues 118–139 traverse the membrane as a helical segment; that stretch reads LIPAIQLTSVGVSVFTLTALSA. The Cytoplasmic portion of the chain corresponds to 140–156; the sequence is DRYRAIVNPMDMQTSGV. Residues 157–177 form a helical membrane-spanning segment; the sequence is VLWTSLKAVGIWVVSVLLAVP. The Extracellular portion of the chain corresponds to 178–211; it reads EAVFSEVARIGSSDNSSFTACIPYPQTDELHPKI. An N-linked (GlcNAc...) asparagine glycan is attached at N192. Residues 212–235 form a helical membrane-spanning segment; sequence HSVLIFLVYFLIPLVIISIYYYHI. The Cytoplasmic segment spans residues 236–266; it reads AKTLIRSAHNLPGEYNEHTKKQMETRKRLAK. A helical transmembrane segment spans residues 267–287; it reads IVLVFVGCFVFCWFPNHILYL. Over 288–299 the chain is Extracellular; sequence YRSFNYKEIDPS. The helical transmembrane segment at 300–327 threads the bilayer; the sequence is LGHMIVTLVARVLSFSNSCVNPFALYLL. Residues 328-390 lie on the Cytoplasmic side of the membrane; it reads SESFRKHFNS…GHSTKQEIAL (63 aa). C341 is lipidated: S-palmitoyl cysteine. Residue S352 is modified to Phosphoserine.

The protein belongs to the G-protein coupled receptor 1 family. In terms of tissue distribution, brain (olfactory bulb and central thalamic regions), and esophagus.

It is found in the cell membrane. Receptor for neuromedin-B. Contributes to the maintenance of basal sigh rate through signaling in the pre-Botzinger complex, a cluster of several thousand neurons in the ventrolateral medulla responsible for inspiration during respiratory activity. Contributes to the induction of sneezing following exposure to chemical irritants or allergens which causes release of NMB by nasal sensory neurons and activation of NMBR-expressing neurons in the sneeze-evoking region of the brainstem. These in turn activate neurons of the caudal ventral respiratory group, giving rise to the sneezing response. Contributes to induction of acute itch, possibly through its activation on dorsal root ganglion neurons by the NMB peptide. Plays a role in the innate immune response to influenza A virus infection by enhancing interferon alpha expression and reducing expression of IL6. Plays a role in CSF1-induced proliferation of osteoclast precursors by contributing to the positive regulation of the expression of the CSF1 receptor CSF1R. This chain is Neuromedin-B receptor (Nmbr), found in Rattus norvegicus (Rat).